Reading from the N-terminus, the 178-residue chain is Orotate phosphoribosyltransferase (178 aa).

5-phospho-alpha-D-ribose 1-diphosphate is bound by residues Arg-92, Lys-93, Lys-96, and 118–126; that span reads EDVTTTGGS. Residues Thr-122 and Arg-150 each contribute to the orotate site.

It belongs to the purine/pyrimidine phosphoribosyltransferase family. PyrE subfamily. In terms of assembly, homodimer. It depends on Mg(2+) as a cofactor.

The catalysed reaction is orotidine 5'-phosphate + diphosphate = orotate + 5-phospho-alpha-D-ribose 1-diphosphate. Its pathway is pyrimidine metabolism; UMP biosynthesis via de novo pathway; UMP from orotate: step 1/2. Its function is as follows. Catalyzes the transfer of a ribosyl phosphate group from 5-phosphoribose 1-diphosphate to orotate, leading to the formation of orotidine monophosphate (OMP). The sequence is that of Orotate phosphoribosyltransferase from Methanosphaera stadtmanae (strain ATCC 43021 / DSM 3091 / JCM 11832 / MCB-3).